A 321-amino-acid polypeptide reads, in one-letter code: MLVDSFNRVIDYIRVSVTKQCNFRCQYCMPTTPLDFFDDEELLPLDNVLEFLKIAIDEGVKKIRITGGEPLLRKGLDEFIAKLHAYNKEVALVLSTNGFSLKKMAKGLKDAGLSRVNVSLDSLKSDRVLKISQKDALKNTLEGIEESLKVGLKLKLNTVVMKGVNDDEILELLEYAKNRSIQIRYIEFMENTHAKSLVKGLKEKEILDLIAQKYKIMGMEKPKQGSSKIYTLENGYQFGIIAPHSDDFCQSCNRIRLASDGKICPCLYYQDAIDAKEAIINKDTKMMKRLLKQSIINKPEKNMWNDKNGGTPTRAFYYTGG.

The region spanning 5 to 233 (SFNRVIDYIR…QGSSKIYTLE (229 aa)) is the Radical SAM core domain. GTP is bound at residue Arg14. The [4Fe-4S] cluster site is built by Cys21 and Cys25. Position 27 (Tyr27) interacts with S-adenosyl-L-methionine. Cys28 contributes to the [4Fe-4S] cluster binding site. Position 64 (Arg64) interacts with GTP. Residue Gly68 participates in S-adenosyl-L-methionine binding. A GTP-binding site is contributed by Ser95. Ser119 provides a ligand contact to S-adenosyl-L-methionine. Lys155 is a binding site for GTP. Met189 is an S-adenosyl-L-methionine binding site. [4Fe-4S] cluster-binding residues include Cys249 and Cys252. 254–256 (RIR) serves as a coordination point for GTP. Residue Cys266 participates in [4Fe-4S] cluster binding.

The protein belongs to the radical SAM superfamily. MoaA family. In terms of assembly, monomer and homodimer. It depends on [4Fe-4S] cluster as a cofactor.

The catalysed reaction is GTP + AH2 + S-adenosyl-L-methionine = (8S)-3',8-cyclo-7,8-dihydroguanosine 5'-triphosphate + 5'-deoxyadenosine + L-methionine + A + H(+). It participates in cofactor biosynthesis; molybdopterin biosynthesis. Catalyzes the cyclization of GTP to (8S)-3',8-cyclo-7,8-dihydroguanosine 5'-triphosphate. This chain is GTP 3',8-cyclase, found in Helicobacter pylori (strain J99 / ATCC 700824) (Campylobacter pylori J99).